A 178-amino-acid chain; its full sequence is Ribosome rescue factor SmrB (178 aa).

One can recognise a Smr domain in the interval 99–174 (LDLHGLTQMQ…GNAALLILIE (76 aa)).

Belongs to the SmrB family. As to quaternary structure, associates with collided ribosomes, but not with correctly translating polysomes.

In terms of biological role, acts as a ribosome collision sensor. Detects stalled/collided disomes (pairs of ribosomes where the leading ribosome is stalled and a second ribosome has collided with it) and endonucleolytically cleaves mRNA at the 5' boundary of the stalled ribosome. Stalled/collided disomes form a new interface (primarily via the 30S subunits) that binds SmrB. Cleaved mRNA becomes available for tmRNA ligation, leading to ribosomal subunit dissociation and rescue of stalled ribosomes. This Photorhabdus laumondii subsp. laumondii (strain DSM 15139 / CIP 105565 / TT01) (Photorhabdus luminescens subsp. laumondii) protein is Ribosome rescue factor SmrB.